The primary structure comprises 126 residues: Fluoride-specific ion channel FluC 2 (126 aa).

4 consecutive transmembrane segments (helical) span residues 11-31 (IFLI…LCEL), 43-63 (VLGS…GFIG), 69-89 (AFGT…VQSF), and 93-113 (FFPA…GVFM). The Na(+) site is built by glycine 76 and threonine 79.

It belongs to the fluoride channel Fluc/FEX (TC 1.A.43) family.

Its subcellular location is the cell membrane. The enzyme catalyses fluoride(in) = fluoride(out). Its activity is regulated as follows. Na(+) is not transported, but it plays an essential structural role and its presence is essential for fluoride channel function. Functionally, fluoride-specific ion channel. Important for reducing fluoride concentration in the cell, thus reducing its toxicity. The chain is Fluoride-specific ion channel FluC 2 from Methanosarcina barkeri (strain Fusaro / DSM 804).